A 434-amino-acid polypeptide reads, in one-letter code: Adenylosuccinate synthetase (434 aa).

GTP-binding positions include 22 to 28 and 50 to 52; these read GDEGKGK and GHT. D23 functions as the Proton acceptor in the catalytic mechanism. The Mg(2+) site is built by D23 and G50. IMP-binding positions include 23–26, 48–51, T139, R153, Q234, T249, and R313; these read DEGK and NAGH. Catalysis depends on H51, which acts as the Proton donor. 309-315 provides a ligand contact to substrate; that stretch reads ATTGRKR. Residues R315, 341 to 343, and 423 to 425 each bind GTP; these read KLD and SVG.

The protein belongs to the adenylosuccinate synthetase family. In terms of assembly, homodimer. The cofactor is Mg(2+).

The protein resides in the cytoplasm. It catalyses the reaction IMP + L-aspartate + GTP = N(6)-(1,2-dicarboxyethyl)-AMP + GDP + phosphate + 2 H(+). It functions in the pathway purine metabolism; AMP biosynthesis via de novo pathway; AMP from IMP: step 1/2. Plays an important role in the de novo pathway of purine nucleotide biosynthesis. Catalyzes the first committed step in the biosynthesis of AMP from IMP. The chain is Adenylosuccinate synthetase from Chlorobium chlorochromatii (strain CaD3).